The sequence spans 343 residues: Anthranilate phosphoribosyltransferase (343 aa).

5-phospho-alpha-D-ribose 1-diphosphate contacts are provided by residues Gly84, Gly87–Asp88, Thr92, Asn94–Thr97, Lys112–Ser120, and Ser124. Gly84 is a binding site for anthranilate. Mg(2+) is bound at residue Ser96. Asn115 provides a ligand contact to anthranilate. Arg170 provides a ligand contact to anthranilate. The Mg(2+) site is built by Asp229 and Glu230.

This sequence belongs to the anthranilate phosphoribosyltransferase family. As to quaternary structure, homodimer. Requires Mg(2+) as cofactor.

It carries out the reaction N-(5-phospho-beta-D-ribosyl)anthranilate + diphosphate = 5-phospho-alpha-D-ribose 1-diphosphate + anthranilate. It participates in amino-acid biosynthesis; L-tryptophan biosynthesis; L-tryptophan from chorismate: step 2/5. Its function is as follows. Catalyzes the transfer of the phosphoribosyl group of 5-phosphorylribose-1-pyrophosphate (PRPP) to anthranilate to yield N-(5'-phosphoribosyl)-anthranilate (PRA). The polypeptide is Anthranilate phosphoribosyltransferase (Stenotrophomonas maltophilia (strain R551-3)).